Consider the following 601-residue polypeptide: Sulfite reductase [NADPH] flavoprotein alpha-component (601 aa).

Residues 64–202 (ITLISASQTG…AAAEWRARIV (139 aa)) form the Flavodoxin-like domain. FMN is bound by residues 70–75 (SQTGNA), 117–120 (STQG), and 153–162 (LGDTSYEFFC). The region spanning 236 to 450 (EEPLVASLSV…IEHNDNFRLP (215 aa)) is the FAD-binding FR-type domain. Residues T324, A358, 388–391 (RLYS), 406–408 (TVG), and 421–424 (GGAS) contribute to the FAD site. NADP(+) is bound by residues 521–522 (SR), 527–531 (KIYVQ), and D563. An FAD-binding site is contributed by Y601.

It belongs to the NADPH-dependent sulphite reductase flavoprotein subunit CysJ family. The protein in the N-terminal section; belongs to the flavodoxin family. In the C-terminal section; belongs to the flavoprotein pyridine nucleotide cytochrome reductase family. As to quaternary structure, alpha(8)-beta(8). The alpha component is a flavoprotein, the beta component is a hemoprotein. FAD serves as cofactor. The cofactor is FMN.

It carries out the reaction hydrogen sulfide + 3 NADP(+) + 3 H2O = sulfite + 3 NADPH + 4 H(+). The protein operates within sulfur metabolism; hydrogen sulfide biosynthesis; hydrogen sulfide from sulfite (NADPH route): step 1/1. In terms of biological role, component of the sulfite reductase complex that catalyzes the 6-electron reduction of sulfite to sulfide. This is one of several activities required for the biosynthesis of L-cysteine from sulfate. The flavoprotein component catalyzes the electron flow from NADPH -&gt; FAD -&gt; FMN to the hemoprotein component. This Enterobacter sp. (strain 638) protein is Sulfite reductase [NADPH] flavoprotein alpha-component.